An 883-amino-acid chain; its full sequence is Phosphoenolpyruvate carboxylase (883 aa).

Residues H141 and K547 contribute to the active site.

Belongs to the PEPCase type 1 family. Mg(2+) is required as a cofactor.

The catalysed reaction is oxaloacetate + phosphate = phosphoenolpyruvate + hydrogencarbonate. In terms of biological role, forms oxaloacetate, a four-carbon dicarboxylic acid source for the tricarboxylic acid cycle. This Chromohalobacter salexigens (strain ATCC BAA-138 / DSM 3043 / CIP 106854 / NCIMB 13768 / 1H11) protein is Phosphoenolpyruvate carboxylase.